A 161-amino-acid chain; its full sequence is Allophycocyanin alpha-B chain (161 aa).

Asparagine 71 carries the N4-methylasparagine modification. Residue cysteine 81 coordinates (2R,3E)-phycocyanobilin.

Belongs to the phycobiliprotein family. Contains one covalently linked bilin chromophore.

It localises to the plastid. It is found in the chloroplast thylakoid membrane. In terms of biological role, allophycocyanin is a photosynthetic bile pigment-protein complex with maximum absorption at approximately 650 nanometers. In Porphyra purpurea (Red seaweed), this protein is Allophycocyanin alpha-B chain (apcD).